The sequence spans 374 residues: Fatty acid conjugase FAC2 A (374 aa).

A run of 2 helical transmembrane segments spans residues 50 to 70 (IIVTCILFYVASNYIPMLPGF) and 74 to 94 (IVWPVYWISQGVFLGRLWMIG). Residues 95–99 (HECGH) carry the Histidine box-1 motif. The Histidine box-2 signature appears at 131–135 (HRNHH). Helical transmembrane passes span 168–188 (MGLMITMLCKLTFGYAAYIMF), 219–239 (VLFSDVGICIVLYACYRIVMV), and 246–266 (FYVYGIPWVIMSAILFAATYL). Residues 306 to 310 (HVIHH) carry the Histidine box-3 motif.

Belongs to the fatty acid desaturase type 1 family. As to expression, expressed exclusively in the developing seeds. Not detected in leaves or flower buds.

It is found in the microsome membrane. It catalyses the reaction a (9Z,12Z)-octadecadienoyl-containing glycerolipid + AH2 + O2 = a (8E,10E,12Z)-octadecatrienoyl-containing glycerolipid + A + 2 H2O. The protein operates within lipid metabolism; polyunsaturated fatty acid biosynthesis. In terms of biological role, fatty acid conjugase converting 18:2(9Z, 12Z) to calendic acid 18:3(8E, 10E, 12Z). Converts alpha-linolenic acid (18:3(9Z, 12Z, 15Z)) into 18:4(8E, 10E, 12Z, 15Z). Also has weak activity on the mono-unsaturates 16:1(9Z) and 18:1(9Z) producing two conjugated double bonds at delta(8) and delta(10) position. The protein is Fatty acid conjugase FAC2 A of Calendula officinalis (Pot marigold).